Consider the following 326-residue polypeptide: Probable cell division protein WhiA (326 aa).

The H-T-H motif DNA-binding region spans Ser-275–Arg-308.

It belongs to the WhiA family.

Its function is as follows. Involved in cell division and chromosome segregation. This chain is Probable cell division protein WhiA, found in Salinispora arenicola (strain CNS-205).